The following is a 221-amino-acid chain: Triosephosphate isomerase (221 aa).

8–10 (NLK) contacts substrate. H92 (electrophile) is an active-site residue. E140 (proton acceptor) is an active-site residue. Residues I145, G180, and 201–202 (AS) contribute to the substrate site.

This sequence belongs to the triosephosphate isomerase family. Homotetramer; dimer of dimers.

The protein resides in the cytoplasm. It carries out the reaction D-glyceraldehyde 3-phosphate = dihydroxyacetone phosphate. It participates in carbohydrate biosynthesis; gluconeogenesis. The protein operates within carbohydrate degradation; glycolysis; D-glyceraldehyde 3-phosphate from glycerone phosphate: step 1/1. Its function is as follows. Involved in the gluconeogenesis. Catalyzes stereospecifically the conversion of dihydroxyacetone phosphate (DHAP) to D-glyceraldehyde-3-phosphate (G3P). In Methanococcoides burtonii (strain DSM 6242 / NBRC 107633 / OCM 468 / ACE-M), this protein is Triosephosphate isomerase.